The chain runs to 132 residues: uncharacterized protein (132 aa).

This is an uncharacterized protein from Caenorhabditis elegans.